Consider the following 364-residue polypeptide: tRNA/tmRNA (uracil-C(5))-methyltransferase (364 aa).

5 residues coordinate S-adenosyl-L-methionine: Q186, Y214, N219, E235, and D295. The active-site Nucleophile is the C320. The active-site Proton acceptor is the E354.

This sequence belongs to the class I-like SAM-binding methyltransferase superfamily. RNA M5U methyltransferase family. TrmA subfamily.

The catalysed reaction is uridine(54) in tRNA + S-adenosyl-L-methionine = 5-methyluridine(54) in tRNA + S-adenosyl-L-homocysteine + H(+). It catalyses the reaction uridine(341) in tmRNA + S-adenosyl-L-methionine = 5-methyluridine(341) in tmRNA + S-adenosyl-L-homocysteine + H(+). Dual-specificity methyltransferase that catalyzes the formation of 5-methyluridine at position 54 (m5U54) in all tRNAs, and that of position 341 (m5U341) in tmRNA (transfer-mRNA). The sequence is that of tRNA/tmRNA (uracil-C(5))-methyltransferase from Azoarcus sp. (strain BH72).